Consider the following 543-residue polypeptide: uncharacterized protein (543 aa).

Positions asparagine 203–glutamate 460 constitute a Radical SAM core domain. The 65-residue stretch at valine 470 to arginine 534 folds into the TRAM domain.

This is an uncharacterized protein from Methanocaldococcus jannaschii (strain ATCC 43067 / DSM 2661 / JAL-1 / JCM 10045 / NBRC 100440) (Methanococcus jannaschii).